The following is a 343-amino-acid chain: L-threonine 3-dehydrogenase (343 aa).

A Zn(2+)-binding site is contributed by C40. Catalysis depends on charge relay system residues T42 and H45. Residues H65, E66, C95, C98, C101, and C109 each coordinate Zn(2+). NAD(+) contacts are provided by residues I177, D197, R202, L264–I266, and I288–Y289.

This sequence belongs to the zinc-containing alcohol dehydrogenase family. Homotetramer. Zn(2+) serves as cofactor.

The protein resides in the cytoplasm. It carries out the reaction L-threonine + NAD(+) = (2S)-2-amino-3-oxobutanoate + NADH + H(+). The protein operates within amino-acid degradation; L-threonine degradation via oxydo-reductase pathway; glycine from L-threonine: step 1/2. In terms of biological role, catalyzes the NAD(+)-dependent oxidation of L-threonine to 2-amino-3-ketobutyrate. The sequence is that of L-threonine 3-dehydrogenase from Photobacterium profundum (strain SS9).